The chain runs to 155 residues: 3-hydroxyacyl-[acyl-carrier-protein] dehydratase FabZ (155 aa).

Residue histidine 58 is part of the active site.

It belongs to the thioester dehydratase family. FabZ subfamily.

The protein resides in the cytoplasm. It carries out the reaction a (3R)-hydroxyacyl-[ACP] = a (2E)-enoyl-[ACP] + H2O. Involved in unsaturated fatty acids biosynthesis. Catalyzes the dehydration of short chain beta-hydroxyacyl-ACPs and long chain saturated and unsaturated beta-hydroxyacyl-ACPs. The sequence is that of 3-hydroxyacyl-[acyl-carrier-protein] dehydratase FabZ from Rhizobium johnstonii (strain DSM 114642 / LMG 32736 / 3841) (Rhizobium leguminosarum bv. viciae).